Reading from the N-terminus, the 227-residue chain is Cell wall mannoprotein CIS3 (227 aa).

The N-terminal stretch at 1-21 (MQFKNVALAASVAALSATASA) is a signal peptide. Positions 22-64 (EGYTPGEPWSTLTPTGSISCGAAEYTTTFGIAVQAITSSKAKR) are excised as a propeptide. Residues 65 to 78 (DVISQIGDGQVQAT) form a PIR1/2/3 repeat. A glycan (O-linked (Man) serine) is linked at Ser-68. Thr-78 carries O-linked (Man) threonine glycosylation. Low complexity predominate over residues 83 to 124 (AQATDSQAQATTTATPTSSEKISSSASKTSTNATSSSCATPS). Residues 83-127 (AQATDSQAQATTTATPTSSEKISSSASKTSTNATSSSCATPSLKD) are disordered. 4 O-linked (Man) serine glycosylation sites follow: Ser-105, Ser-106, Ser-107, and Ser-109. An O-linked (Man) threonine glycan is attached at Thr-111. The O-linked (Man) serine glycan is linked to Ser-112. An O-linked (Man) threonine glycan is attached at Thr-113. Asn-114 carries N-linked (GlcNAc...) asparagine glycosylation. O-linked (Man) threonine glycosylation occurs at Thr-116. Residues Ser-117 and Ser-118 are each glycosylated (O-linked (Man) serine).

This sequence belongs to the PIR protein family. In terms of processing, covalently linked to beta-1,3-glucan of the inner cell wall layer via an alkali-sensitive ester linkage between the gamma-carboxyl group of glutamic acid, arising from Gln-74 within the PIR1/2/3 repeat, and hydroxyl groups of glucoses of beta-1,3-glucan chains. Extensively O-mannosylated. Also N-glycosylated.

It localises to the secreted. Its subcellular location is the cell wall. In terms of biological role, component of the outer cell wall layer. Required for stability of the cell wall and for optimal growth. Required for resistance against several antifungal and cell wall-perturbing agents. The polypeptide is Cell wall mannoprotein CIS3 (CIS3) (Saccharomyces cerevisiae (strain ATCC 204508 / S288c) (Baker's yeast)).